A 272-amino-acid polypeptide reads, in one-letter code: Auxin-responsive protein IAA5 (272 aa).

Positions 1 to 92 (MSPPLEPHDY…DSSPRHGASS (92 aa)) are disordered. Low complexity-rich tracts occupy residues 14-33 (SAAAASPTPSSSSCSSSPNP) and 40-50 (PRLTLRLGLPG). Positions 44–48 (LRLGL) match the EAR-like (transcriptional repression) motif. The region spanning 152 to 256 (PLYVKVSMDG…RKLKIMRGSD (105 aa)) is the PB1 domain.

It belongs to the Aux/IAA family. In terms of assembly, homodimers and heterodimers. In terms of tissue distribution, highly expressed in roots and flowers. Expressed in shoots.

It is found in the nucleus. Functionally, aux/IAA proteins are short-lived transcriptional factors that function as repressors of early auxin response genes at low auxin concentrations. This chain is Auxin-responsive protein IAA5 (IAA5), found in Oryza sativa subsp. indica (Rice).